The primary structure comprises 1781 residues: Signal-induced proliferation-associated 1-like protein 3 (1781 aa).

Disordered regions lie at residues S45–L166 and T239–R332. A compositionally biased stretch (low complexity) spans P54–A73. Positions P87 to S97 are enriched in basic and acidic residues. At S100 the chain carries Phosphoserine. Residues R118–S135 show a composition bias toward polar residues. A compositionally biased stretch (basic residues) spans A137–S146. S146 bears the Phosphoserine mark. S401 bears the Phosphoserine mark. The 218-residue stretch at L611–L828 folds into the Rap-GAP domain. Residues D966–E1042 form the PDZ domain. 4 disordered regions span residues P1046–R1112, E1124–E1221, A1236–P1565, and T1583–P1636. Polar residues-rich tracts occupy residues A1080–S1111 and P1157–S1166. The span at D1196–S1210 shows a compositional bias: low complexity. Positions S1245–G1261 are enriched in basic and acidic residues. The span at S1266–S1281 shows a compositional bias: low complexity. Polar residues predominate over residues G1304 to C1322. S1364 carries the phosphoserine modification. Residue T1387 is modified to Phosphothreonine. The segment covering R1425–V1441 has biased composition (polar residues). K1448 is subject to N6-acetyllysine. The span at T1509–I1518 shows a compositional bias: basic and acidic residues. Over residues G1532–S1547 the composition is skewed to polar residues. 2 positions are modified to phosphoserine: S1544 and S1547. Over residues P1599–F1609 the composition is skewed to low complexity. Phosphoserine is present on residues S1619 and S1622. Over residues D1625–D1635 the composition is skewed to basic and acidic residues. S1677 is subject to Phosphoserine. Residues S1685 to L1712 are disordered. 2 positions are modified to phosphothreonine: T1699 and T1703. Positions Q1720–F1774 form a coiled coil.

The protein resides in the apical cell membrane. Its function is as follows. Plays a critical role in epithelial cell morphogenesis, polarity, adhesion and cytoskeletal organization in the lens. This Homo sapiens (Human) protein is Signal-induced proliferation-associated 1-like protein 3 (SIPA1L3).